Reading from the N-terminus, the 436-residue chain is GTPase Der (436 aa).

EngA-type G domains lie at 4-167 (PTVA…PVEE) and 175-351 (IRFS…ESQN). Residues 10–17 (GRPNVGKS), 57–61 (DTGGI), 119–122 (NKVD), 181–188 (GRPNVGKS), 229–233 (DTAGM), and 294–297 (NKWD) contribute to the GTP site. Positions 352–436 (KRIPSAVLND…PIHLIARKRK (85 aa)) constitute a KH-like domain.

This sequence belongs to the TRAFAC class TrmE-Era-EngA-EngB-Septin-like GTPase superfamily. EngA (Der) GTPase family. In terms of assembly, associates with the 50S ribosomal subunit.

Its function is as follows. GTPase that plays an essential role in the late steps of ribosome biogenesis. This chain is GTPase Der, found in Streptococcus pyogenes serotype M1.